We begin with the raw amino-acid sequence, 991 residues long: KAT8 regulatory NSL complex subunit 1-like protein (991 aa).

Lysine 136 participates in a covalent cross-link: Glycyl lysine isopeptide (Lys-Gly) (interchain with G-Cter in SUMO2). Residues 443–462 are disordered; it reads VNSQVPQRSEEPLPEHDFEM. Residues 450–461 show a composition bias toward basic and acidic residues; that stretch reads RSEEPLPEHDFE. The residue at position 463 (serine 463) is a Phosphoserine. Residues 749-763 are compositionally biased toward polar residues; that stretch reads ANVTSRTQNPSSQNT. The tract at residues 749-770 is disordered; it reads ANVTSRTQNPSSQNTSRRRLRS. Positions 798-919 constitute a PEHE domain; sequence EILTPRWRKV…DGQEDKSLRW (122 aa). N6-acetyllysine is present on lysine 863.

In terms of processing, acetylated on lysine residues by KAT8 upon ionizing radiation-induced DNA damage; deacetylated by HDAC3.

The chain is KAT8 regulatory NSL complex subunit 1-like protein (Kansl1l) from Mus musculus (Mouse).